The chain runs to 294 residues: Small ribosomal subunit protein uS3 (294 aa).

Residues 39–107 form the KH type-2 domain; that stretch reads VREYLKTKLK…PVAVNIEEVR (69 aa). The interval 210-294 is disordered; it reads RNDLPAVETP…AAPAADVKGE (85 aa). Positions 219-238 are enriched in basic and acidic residues; it reads PRPDEERRPRGPRRDGRPGG. 2 stretches are compositionally biased toward low complexity: residues 249–258 and 281–294; these read RPAAGNSAPA and VAAP…VKGE.

Belongs to the universal ribosomal protein uS3 family. Part of the 30S ribosomal subunit. Forms a tight complex with proteins S10 and S14.

Binds the lower part of the 30S subunit head. Binds mRNA in the 70S ribosome, positioning it for translation. This is Small ribosomal subunit protein uS3 from Verminephrobacter eiseniae (strain EF01-2).